A 525-amino-acid chain; its full sequence is NAD(P)H-quinone oxidoreductase chain 4 1 (525 aa).

14 helical membrane-spanning segments follow: residues 6–26 (FPWL…IPII), 36–56 (WYAL…FYTS), 91–111 (LIIL…PVTL), 115–135 (LFYF…AVQD), 136–156 (LLLF…LLAI), 169–189 (FILY…TMAF), 212–232 (LLLY…IPLH), 243–263 (TAPA…YALI), 277–297 (FAPV…LTSF), 314–334 (MGFV…GAVL), 335–355 (QMVS…ATYD), 375–397 (IFAM…GFVA), 417–437 (VIVV…LLSM), and 464–484 (VFVI…PKLL).

It belongs to the complex I subunit 4 family.

The protein localises to the cellular thylakoid membrane. It catalyses the reaction a plastoquinone + NADH + (n+1) H(+)(in) = a plastoquinol + NAD(+) + n H(+)(out). It carries out the reaction a plastoquinone + NADPH + (n+1) H(+)(in) = a plastoquinol + NADP(+) + n H(+)(out). In terms of biological role, NDH-1 shuttles electrons from NAD(P)H, via FMN and iron-sulfur (Fe-S) centers, to quinones in the respiratory chain. The immediate electron acceptor for the enzyme in this species is believed to be plastoquinone. Couples the redox reaction to proton translocation (for every two electrons transferred, four hydrogen ions are translocated across the cytoplasmic membrane), and thus conserves the redox energy in a proton gradient. The protein is NAD(P)H-quinone oxidoreductase chain 4 1 of Trichormus variabilis (strain ATCC 29413 / PCC 7937) (Anabaena variabilis).